A 411-amino-acid polypeptide reads, in one-letter code: MMP alpha-(1-&gt;4)-mannosyltransferase (411 aa).

It belongs to the glycosyltransferase group 1 family. Glycosyltransferase 4 subfamily.

The enzyme catalyses [3-O-methyl-alpha-D-mannosyl-(1-&gt;4)](n)-3-O-methyl-D-mannose + GDP-alpha-D-mannose = alpha-D-mannosyl-(1-&gt;4)-[3-O-methyl-alpha-D-mannosyl-(1-&gt;4)](n)-3-O-methyl-D-mannose + GDP + H(+). The catalysed reaction is [3-O-methyl-alpha-D-mannosyl-(1-&gt;4)](n)-1-O,3-O-dimethyl-alpha-D-mannose + GDP-alpha-D-mannose = alpha-D-mannosyl-(1-&gt;4)-[3-O-methyl-alpha-D-mannosyl-(1-&gt;4)](n)-1-O,3-O-dimethyl-alpha-D-mannose + GDP + H(+). Its activity is regulated as follows. Activity is significantly enhanced in the presence of Mg(2+). Glycosyltransferase involved in the biosynthesis of 3-O-methylmannose polysaccharides (MMP), which are intracellular polymethylated polysaccharides implicated in the modulation of fatty acid metabolism in non-tuberculous mycobacteria. Highly specific alpha-(1-&gt;4)-mannosyltransferase that can transfer mannose units from GDP-mannose to a wide range of alpha-(1-&gt;4) oligomannosides longer than three mannoses, including all hydrolytic products of MmpH. Can use synthetic trimannosides and tetramannosides as substrates, but not mono- and disaccharides, and is significantly more active with the methylated substrates, preferring the tetramannosides over the trimannosides. The protein is MMP alpha-(1-&gt;4)-mannosyltransferase of Mycolicibacterium hassiacum (strain DSM 44199 / CIP 105218 / JCM 12690 / 3849) (Mycobacterium hassiacum).